The primary structure comprises 132 residues: Ribosome-binding factor A (132 aa).

The protein belongs to the RbfA family. As to quaternary structure, monomer. Binds 30S ribosomal subunits, but not 50S ribosomal subunits or 70S ribosomes.

Its subcellular location is the cytoplasm. In terms of biological role, one of several proteins that assist in the late maturation steps of the functional core of the 30S ribosomal subunit. Associates with free 30S ribosomal subunits (but not with 30S subunits that are part of 70S ribosomes or polysomes). Required for efficient processing of 16S rRNA. May interact with the 5'-terminal helix region of 16S rRNA. This chain is Ribosome-binding factor A, found in Edwardsiella ictaluri (strain 93-146).